The chain runs to 173 residues: Membrane protein PM19L (173 aa).

4 consecutive transmembrane segments (helical) span residues 9-29 (IAPL…FASW), 43-63 (GVAG…AGVV), 83-103 (LAAG…AFGL), and 124-144 (FVII…GGLF).

Expressed in roots, leaf blades, leaf sheaths, stems, spikelets and embryos.

The protein localises to the membrane. Its function is as follows. May be involved in abiotic stress response through abscisic acid-dependent signaling. This chain is Membrane protein PM19L, found in Oryza sativa subsp. japonica (Rice).